The sequence spans 161 residues: RNA pyrophosphohydrolase (161 aa).

One can recognise a Nudix hydrolase domain in the interval 6 to 149 (GYRPNVGIIL…KREVYRRAMR (144 aa)). The Nudix box signature appears at 38-59 (GGIKKDESPEEALFRELKEEVG).

This sequence belongs to the Nudix hydrolase family. RppH subfamily. A divalent metal cation serves as cofactor.

Functionally, accelerates the degradation of transcripts by removing pyrophosphate from the 5'-end of triphosphorylated RNA, leading to a more labile monophosphorylated state that can stimulate subsequent ribonuclease cleavage. In Hahella chejuensis (strain KCTC 2396), this protein is RNA pyrophosphohydrolase.